Here is a 175-residue protein sequence, read N- to C-terminus: Transcription factor E (175 aa).

One can recognise an HTH TFE/IIEalpha-type domain in the interval 3–88 (DNPLIQQVLF…TWKPSLEKLP (86 aa)).

It belongs to the TFE family. Monomer. Interaction with RNA polymerase subunits RpoF and RpoE is necessary for Tfe stimulatory transcription activity. Able to interact with Tbp and RNA polymerase in the absence of DNA promoter. Interacts both with the preinitiation and elongation complexes.

Its function is as follows. Transcription factor that plays a role in the activation of archaeal genes transcribed by RNA polymerase. Facilitates transcription initiation by enhancing TATA-box recognition by TATA-box-binding protein (Tbp), and transcription factor B (Tfb) and RNA polymerase recruitment. Not absolutely required for transcription in vitro, but particularly important in cases where Tbp or Tfb function is not optimal. It dynamically alters the nucleic acid-binding properties of RNA polymerases by stabilizing the initiation complex and destabilizing elongation complexes. Seems to translocate with the RNA polymerase following initiation and acts by binding to the non template strand of the transcription bubble in elongation complexes. This chain is Transcription factor E, found in Methanococcus vannielii (strain ATCC 35089 / DSM 1224 / JCM 13029 / OCM 148 / SB).